The primary structure comprises 314 residues: Cytochrome b558/566 subunit B (314 aa).

Transmembrane regions (helical) follow at residues 47–67 (LLLVIGNISFYFFFVFLLIVS), 76–96 (SLIPLTIILTISPFITLIPNY), 102–122 (LYSLEIAILILGLASTIEGLI), 127–147 (LSILLIPTLVLVNLGIYASIL), 155–175 (LFISYLTIYLISIAGYLAYVI), 186–206 (YIAISVGLLSMIPFIFFENII), 233–253 (HITLLVMALGLSTMGIVTSLI), and 264–284 (FLIITTVFLGIDGFSLLIYML).

It localises to the cell membrane. The polypeptide is Cytochrome b558/566 subunit B (cbsB) (Saccharolobus solfataricus (strain ATCC 35092 / DSM 1617 / JCM 11322 / P2) (Sulfolobus solfataricus)).